A 369-amino-acid polypeptide reads, in one-letter code: Putative agmatine deiminase 2 (369 aa).

The Amidino-cysteine intermediate role is filled by Cys-356.

Belongs to the agmatine deiminase family.

It catalyses the reaction agmatine + H2O = N-carbamoylputrescine + NH4(+). This is Putative agmatine deiminase 2 from Listeria monocytogenes serovar 1/2a (strain ATCC BAA-679 / EGD-e).